We begin with the raw amino-acid sequence, 510 residues long: GMP synthase [glutamine-hydrolyzing] (510 aa).

Positions 5–195 (LVLILDFGGQ…LYEVCHCQGD (191 aa)) constitute a Glutamine amidotransferase type-1 domain. Cys82 functions as the Nucleophile in the catalytic mechanism. Catalysis depends on residues His169 and Glu171. A GMPS ATP-PPase domain is found at 196–385 (WTMENYIEKE…LGVPEEIVWR (190 aa)). 223 to 229 (SGGVDSS) is an ATP binding site.

Homodimer.

The catalysed reaction is XMP + L-glutamine + ATP + H2O = GMP + L-glutamate + AMP + diphosphate + 2 H(+). The protein operates within purine metabolism; GMP biosynthesis; GMP from XMP (L-Gln route): step 1/1. In terms of biological role, catalyzes the synthesis of GMP from XMP. This Alkaliphilus metalliredigens (strain QYMF) protein is GMP synthase [glutamine-hydrolyzing].